We begin with the raw amino-acid sequence, 324 residues long: Glyoxylate/hydroxypyruvate reductase B (324 aa).

Catalysis depends on residues Arg237 and Glu266. Residue His285 is the Proton donor of the active site.

The protein belongs to the D-isomer specific 2-hydroxyacid dehydrogenase family. GhrB subfamily. Homodimer.

It is found in the cytoplasm. It carries out the reaction glycolate + NADP(+) = glyoxylate + NADPH + H(+). It catalyses the reaction (R)-glycerate + NAD(+) = 3-hydroxypyruvate + NADH + H(+). The catalysed reaction is (R)-glycerate + NADP(+) = 3-hydroxypyruvate + NADPH + H(+). In terms of biological role, catalyzes the NADPH-dependent reduction of glyoxylate and hydroxypyruvate into glycolate and glycerate, respectively. This chain is Glyoxylate/hydroxypyruvate reductase B, found in Salmonella choleraesuis (strain SC-B67).